Reading from the N-terminus, the 390-residue chain is UDP-galactose translocator (390 aa).

Residues M1–E24 form a disordered region. 10 helical membrane passes run A3–L23, Y37–A57, F65–L85, L97–V117, T140–L160, W169–G189, G200–F220, L238–V258, P269–V289, and L315–V335. Residues S9–A22 are compositionally biased toward low complexity. The tract at residues P356 to K390 is disordered.

It belongs to the nucleotide-sugar transporter family. SLC35A subfamily. In terms of assembly, interacts with SLC35A3; the interaction is reduced in the presence of SLC35A4. Found in a complex with SLC35A3 and SLC35A4.

It is found in the golgi apparatus membrane. The enzyme catalyses UMP(out) + UDP-alpha-D-galactose(in) = UMP(in) + UDP-alpha-D-galactose(out). It carries out the reaction UDP-N-acetyl-alpha-D-galactosamine(in) + UMP(out) = UDP-N-acetyl-alpha-D-galactosamine(out) + UMP(in). It catalyses the reaction UMP(out) + UDP-alpha-D-glucose(in) = UMP(in) + UDP-alpha-D-glucose(out). The catalysed reaction is UMP(out) + UDP-N-acetyl-alpha-D-glucosamine(in) = UMP(in) + UDP-N-acetyl-alpha-D-glucosamine(out). The enzyme catalyses UDP-alpha-D-galactose(in) + AMP(out) = UDP-alpha-D-galactose(out) + AMP(in). It carries out the reaction UDP-alpha-D-galactose(in) + CMP(out) = UDP-alpha-D-galactose(out) + CMP(in). It catalyses the reaction UDP-N-acetyl-alpha-D-galactosamine(out) + UDP-alpha-D-galactose(in) = UDP-N-acetyl-alpha-D-galactosamine(in) + UDP-alpha-D-galactose(out). The catalysed reaction is UDP-N-acetyl-alpha-D-glucosamine(out) + UDP-alpha-D-galactose(in) = UDP-N-acetyl-alpha-D-glucosamine(in) + UDP-alpha-D-galactose(out). The enzyme catalyses UDP-alpha-D-galactose(in) + UDP-alpha-D-glucose(out) = UDP-alpha-D-galactose(out) + UDP-alpha-D-glucose(in). It carries out the reaction UMP(out) + CMP(in) = UMP(in) + CMP(out). It catalyses the reaction UMP(out) + AMP(in) = UMP(in) + AMP(out). Its function is as follows. Transports uridine diphosphate galactose (UDP-galactose) from the cytosol into the Golgi apparatus. It functions as an antiporter that exchanges UDP-galactose for UMP. It is also able to exchange UDP-galactose for AMP and CMP, and to transport UDP-N-acetylgalactosamine (UDP-GalNAc) and other nucleotide sugars. As a provider of UDP-galactose to galactosyltransferases present in the Golgi apparatus, it is necessary for globotriaosylceramide/globoside (Gb3Cer) synthesis from lactosylceramide. The chain is UDP-galactose translocator from Mus musculus (Mouse).